A 349-amino-acid polypeptide reads, in one-letter code: Dihydroorotase (349 aa).

Zn(2+) contacts are provided by histidine 17 and histidine 19. Substrate contacts are provided by residues histidine 19–arginine 21 and asparagine 45. Zn(2+)-binding residues include lysine 103, histidine 140, and histidine 178. At lysine 103 the chain carries N6-carboxylysine. Substrate is bound at residue histidine 140. Leucine 224 provides a ligand contact to substrate. Aspartate 252 is a Zn(2+) binding site. Aspartate 252 is a catalytic residue. Histidine 256 and alanine 268 together coordinate substrate.

The protein belongs to the metallo-dependent hydrolases superfamily. DHOase family. Class II DHOase subfamily. Homodimer. Zn(2+) is required as a cofactor.

It catalyses the reaction (S)-dihydroorotate + H2O = N-carbamoyl-L-aspartate + H(+). Its pathway is pyrimidine metabolism; UMP biosynthesis via de novo pathway; (S)-dihydroorotate from bicarbonate: step 3/3. Catalyzes the reversible cyclization of carbamoyl aspartate to dihydroorotate. This chain is Dihydroorotase, found in Buchnera aphidicola subsp. Schizaphis graminum (strain Sg).